A 355-amino-acid chain; its full sequence is Probable butyrate kinase (355 aa).

Belongs to the acetokinase family.

It localises to the cytoplasm. It catalyses the reaction butanoate + ATP = butanoyl phosphate + ADP. The polypeptide is Probable butyrate kinase (Clostridium botulinum (strain Alaska E43 / Type E3)).